Here is a 96-residue protein sequence, read N- to C-terminus: Aspartyl/glutamyl-tRNA(Asn/Gln) amidotransferase subunit C (96 aa).

Belongs to the GatC family. In terms of assembly, heterotrimer of A, B and C subunits.

The enzyme catalyses L-glutamyl-tRNA(Gln) + L-glutamine + ATP + H2O = L-glutaminyl-tRNA(Gln) + L-glutamate + ADP + phosphate + H(+). The catalysed reaction is L-aspartyl-tRNA(Asn) + L-glutamine + ATP + H2O = L-asparaginyl-tRNA(Asn) + L-glutamate + ADP + phosphate + 2 H(+). Its function is as follows. Allows the formation of correctly charged Asn-tRNA(Asn) or Gln-tRNA(Gln) through the transamidation of misacylated Asp-tRNA(Asn) or Glu-tRNA(Gln) in organisms which lack either or both of asparaginyl-tRNA or glutaminyl-tRNA synthetases. The reaction takes place in the presence of glutamine and ATP through an activated phospho-Asp-tRNA(Asn) or phospho-Glu-tRNA(Gln). The sequence is that of Aspartyl/glutamyl-tRNA(Asn/Gln) amidotransferase subunit C from Exiguobacterium sp. (strain ATCC BAA-1283 / AT1b).